Consider the following 301-residue polypeptide: 2-(hydroxymethyl)glutarate dehydrogenase (301 aa).

Residues 8-22 (GFIG…MAIN) and serine 99 each bind NAD(+). The active site involves lysine 174. Lysine 243 provides a ligand contact to NAD(+).

Belongs to the HIBADH-related family. In terms of assembly, homotetramer.

It carries out the reaction (S)-2-hydroxymethylglutarate + NAD(+) = 2-formylglutarate + NADH + H(+). It participates in cofactor degradation; nicotinate degradation; propanoate and pyruvate from 6-hydroxynicotinate: step 3/8. Catalyzes the conversion of 2-formylglutarate to (S)-2-hydroxymethylglutarate. Has very low activity with (S)-3-hydroxyisobutyrate. The sequence is that of 2-(hydroxymethyl)glutarate dehydrogenase from Eubacterium barkeri (Clostridium barkeri).